Consider the following 149-residue polypeptide: Large ribosomal subunit protein bL9 (149 aa).

Belongs to the bacterial ribosomal protein bL9 family.

Functionally, binds to the 23S rRNA. The chain is Large ribosomal subunit protein bL9 from Christiangramia forsetii (strain DSM 17595 / CGMCC 1.15422 / KT0803) (Gramella forsetii).